The following is a 195-amino-acid chain: UPF0301 protein Bpro_1142 (195 aa).

It belongs to the UPF0301 (AlgH) family.

In Polaromonas sp. (strain JS666 / ATCC BAA-500), this protein is UPF0301 protein Bpro_1142.